The following is a 319-amino-acid chain: Probable secreted beta-glucosidase C2G2.17c (319 aa).

Residues 1 to 19 form the signal peptide; that stretch reads MLFNNFLCFAVSAIPLVSA. Asn36, Asn39, Asn45, Asn48, and Asn221 each carry an N-linked (GlcNAc...) asparagine glycan.

Belongs to the SUN family.

The protein localises to the secreted. Functionally, cell surface beta-glucosidase involved in cell wall biogenesis. In Schizosaccharomyces pombe (strain 972 / ATCC 24843) (Fission yeast), this protein is Probable secreted beta-glucosidase C2G2.17c.